Reading from the N-terminus, the 139-residue chain is Small capsomere-interacting protein (139 aa).

Over residues 100–120 (SLTTPSLSSTPTSLTSMPGLS) the composition is skewed to low complexity. The disordered stretch occupies residues 100–139 (SLTTPSLSSTPTSLTSMPGLSISGPSTTDTIDSKKKPKAK).

Belongs to the herpesviridae small capsomere-interacting protein family. Interacts with the major capsid protein/MCP.

The protein localises to the virion. Its subcellular location is the host nucleus. In terms of biological role, participates in the assembly of the infectious particles by decorating the outer surface of the capsid shell and thus forming a layer between the capsid and the tegument. Complexes composed of the major capsid protein and small capsomere-interacting protein/SCP assemble together in the host cytoplasm and are translocated to the nucleus, where they accumulate and participate in capsid assembly. This chain is Small capsomere-interacting protein, found in Saimiri sciureus (Common squirrel monkey).